The following is a 352-amino-acid chain: Uroporphyrinogen decarboxylase (352 aa).

Substrate is bound by residues Arg-26–Arg-30, Asp-76, Tyr-153, Ser-208, and His-323.

Belongs to the uroporphyrinogen decarboxylase family. Homodimer.

It localises to the cytoplasm. It catalyses the reaction uroporphyrinogen III + 4 H(+) = coproporphyrinogen III + 4 CO2. It functions in the pathway porphyrin-containing compound metabolism; protoporphyrin-IX biosynthesis; coproporphyrinogen-III from 5-aminolevulinate: step 4/4. In terms of biological role, catalyzes the decarboxylation of four acetate groups of uroporphyrinogen-III to yield coproporphyrinogen-III. The protein is Uroporphyrinogen decarboxylase of Synechococcus sp. (strain CC9902).